The following is a 2476-amino-acid chain: Transcriptional regulator ATRX (2476 aa).

K10 is covalently cross-linked (Glycyl lysine isopeptide (Lys-Gly) (interchain with G-Cter in SUMO2)). Residues 24–154 form a disordered region; the sequence is HSSEESEETC…FRSRSKMKAD (131 aa). Phosphoserine occurs at positions 25 and 34. Positions 40 to 57 are enriched in polar residues; it reads MNQSTDKICGSGLNSDMM. Positions 58–72 are enriched in basic and acidic residues; it reads ENNKEEGASTSEKSR. Y89 carries the phosphotyrosine modification. Phosphoserine is present on S92. The span at 98-107 shows a compositional bias: basic and acidic residues; sequence TDENVNEKAA. Residues 108 to 121 show a composition bias toward polar residues; that stretch reads TENSENDITMQSLP. S111 carries the post-translational modification Phosphoserine. Residues 134–154 show a composition bias toward basic and acidic residues; the sequence is NEDKDDFKGPEFRSRSKMKAD. Glycyl lysine isopeptide (Lys-Gly) (interchain with G-Cter in SUMO2) cross-links involve residues K137 and K141. The 138-residue stretch at 158-295 folds into the ADD domain; that stretch reads KRGEDGLHGI…LEQLLQQNKK (138 aa). The segment at 169–205 adopts a GATA-type; atypical zinc-finger fold; sequence SCTACGQQVNHFQKDSIYRHPSLKVLICKNCFKYYMS. S212 carries the post-translational modification Phosphoserine. The segment at 216–271 adopts a PHD-type; atypical zinc-finger fold; sequence DEQCRWCAEGGNLICCDFCHNAFCKKCILRNLGRKELSTIMDENNQWYCYICQPEP. Residue K298 forms a Glycyl lysine isopeptide (Lys-Gly) (interchain with G-Cter in SUMO2) linkage. S315 is subject to Phosphoserine. Disordered regions lie at residues 427 to 451, 466 to 507, and 525 to 568; these read EKNT…EKSY, SVKA…DLDM, and ESAM…NIKS. Residue K439 forms a Glycyl lysine isopeptide (Lys-Gly) (interchain with G-Cter in SUMO2) linkage. The span at 466 to 494 shows a compositional bias: basic and acidic residues; the sequence is SVKAIDGEEQRAHKSTSGEHKGSGRKDGS. Polar residues predominate over residues 549–559; sequence ESSSVKLNVSS. A PxVxL motif motif is present at residues 573 to 586; it reads KVRKELFVKLTPVS. Residue T583 is modified to Phosphothreonine. Disordered regions lie at residues 585–877 and 893–1464; these read VSLS…GGSI and PGVS…GRKK. S586, S590, S626, S663, S665, S717, and S719 each carry phosphoserine. Positions 615-630 are enriched in basic and acidic residues; sequence SSEKCRPREEISDHEN. A compositionally biased stretch (polar residues) spans 732 to 746; it reads MGHSSSSDTDINEPQ. Phosphoserine occurs at positions 766, 801, 828, 829, 854, 855, and 871. Basic and acidic residues predominate over residues 819 to 849; the sequence is SVPEKKEEDSSEDEKQGKKVVDNGGHERAKT. The segment covering 899 to 922 has biased composition (basic and acidic residues); sequence GAEKPSVKEENVNSPEDKRVSKTK. The segment covering 923–937 has biased composition (basic residues); it reads EKTKHLRSRQSRKGK. S941 and S953 each carry phosphoserine. Basic and acidic residues predominate over residues 943–963; sequence GTDRFPKKEQSDESSEGEKKQ. Basic residues predominate over residues 964–973; sequence SRQRPGTKGK. The segment covering 974-988 has biased composition (basic and acidic residues); the sequence is KAPDLKGETLKREQE. K984 participates in a covalent cross-link: Glycyl lysine isopeptide (Lys-Gly) (interchain with G-Cter in SUMO2). A phosphoserine mark is found at S991, S992, S993, and S1041. Residues 1031–1061 are compositionally biased toward basic and acidic residues; the sequence is DKSCEKKEELSDSVDKLPGKGDSCDSSEDKK. The segment covering 1062–1074 has biased composition (basic residues); it reads TRNRVSLREKKRF. R1063 is modified (citrulline). 2 stretches are compositionally biased toward basic and acidic residues: residues 1083–1096 and 1103–1129; these read KRPE…EKSL and STEK…KEVK. Residues 1146–1175 are compositionally biased toward basic residues; the sequence is KQKKQRTSAKKKTGNTKEKKRNSLRATPKR. Residues 1169 to 1313 form an interaction with DAXX region; the sequence is LRATPKRKQV…VNQVNSESDS (145 aa). Residues S1223, S1224, and S1232 each carry the phosphoserine modification. Residues 1246-1260 show a composition bias toward basic and acidic residues; that stretch reads PENRIAKKMLLEEIK. Positions 1265–1276 are enriched in acidic residues; sequence SDEDGSSDDEPD. Phosphoserine is present on residues S1309, S1311, and S1313. A compositionally biased stretch (basic residues) spans 1321 to 1332; it reads PRYRHRLLRHKL. S1335 and S1339 each carry phosphoserine. 2 stretches are compositionally biased toward basic and acidic residues: residues 1340-1355 and 1395-1404; these read GEEK…EAKG and KKAELEENQR. Residues 1406-1415 show a composition bias toward basic residues; sequence YKQKKKRRRI. Over residues 1416-1436 the composition is skewed to basic and acidic residues; the sequence is KVQEDSSSENKSHSEEDKKEG. The span at 1437 to 1453 shows a compositional bias: acidic residues; that stretch reads DEEDEEDEDEDEEDEND. A Glycyl lysine isopeptide (Lys-Gly) (interchain with G-Cter in SUMO2) cross-link involves residue K1473. At S1512 the chain carries Phosphoserine. A Phosphothreonine modification is found at T1514. Residues 1566–1753 enclose the Helicase ATP-binding domain; that stretch reads KTKKSPGSGC…HCMVNFIKEN (188 aa). 1579 to 1586 is a binding site for ATP; the sequence is HCMGLGKT. Positions 1704 to 1707 match the DEGH box motif; it reads DEGH. Phosphoserine occurs at positions 1891 and 1898. Residues 1898–1982 form a disordered region; sequence SDSDETSKSL…STSNPSSPAP (85 aa). Basic and acidic residues predominate over residues 1902-1913; the sequence is ETSKSLSSDEKK. Residue K1965 forms a Glycyl lysine isopeptide (Lys-Gly) (interchain with G-Cter in SUMO1); alternate linkage. Residue K1965 forms a Glycyl lysine isopeptide (Lys-Gly) (interchain with G-Cter in SUMO2); alternate linkage. Residue K1970 forms a Glycyl lysine isopeptide (Lys-Gly) (interchain with G-Cter in SUMO2) linkage. Over residues 1971–1982 the composition is skewed to low complexity; it reads TTSTSNPSSPAP. S1975 and S1979 each carry phosphoserine. An interaction with MECP2 region spans residues 1993 to 2263; the sequence is DAEVLEHSGK…RKAAWAEYEA (271 aa). One can recognise a Helicase C-terminal domain in the interval 2008 to 2188; the sequence is EILRMAEEIG…ERHFTMNELT (181 aa). Phosphoserine is present on S2203. Residues 2445 to 2476 are disordered; that stretch reads SVAGGMQPPPLQRAPPPTVRSKNPGPSPGKSM. The span at 2451-2462 shows a compositional bias: pro residues; the sequence is QPPPLQRAPPPT. An omega-N-methylarginine mark is found at R2457 and R2464.

It belongs to the SNF2/RAD54 helicase family. Interacts with DAXX to form the chromatin remodeling complex ATRX:DAXX. Probably binds EZH2. Binds annexin V in a calcium and phosphatidylcholine/phosphatidylserine-dependent manner. Interacts directly with CBX5 via the PxVxL motif. Interacts with RAD50, MRE11 and NBN; indicative for an association with the MRN complex. Interacts with histone MACROH2A1. Interacts with histone H3 peptides methylated at 'Lys-10' with preferences H3K9me3 &gt; H3K9me2 &gt; H3K9me1. Interacts with histone H3 peptides unmethylated at 'Lys-5' (H3K4me0). Interacts with MECP2, SMC1 and SMC3. Interacts with SETDB1, TRIM28 and ZNF274. Citrullinated by PADI4.

The protein localises to the nucleus. It is found in the chromosome. It localises to the telomere. Its subcellular location is the PML body. The enzyme catalyses ATP + H2O = ADP + phosphate + H(+). Involved in transcriptional regulation and chromatin remodeling. Facilitates DNA replication in multiple cellular environments and is required for efficient replication of a subset of genomic loci. Binds to DNA tandem repeat sequences in both telomeres and euchromatin and in vitro binds DNA quadruplex structures. May help stabilizing G-rich regions into regular chromatin structures by remodeling G4 DNA and incorporating H3.3-containing nucleosomes. Catalytic component of the chromatin remodeling complex ATRX:DAXX which has ATP-dependent DNA translocase activity and catalyzes the replication-independent deposition of histone H3.3 in pericentric DNA repeats outside S-phase and telomeres, and the in vitro remodeling of H3.3-containing nucleosomes. Its heterochromatin targeting is proposed to involve a combinatorial readout of histone H3 modifications (specifically methylation states of H3K9 and H3K4) and association with CBX5. Involved in maintaining telomere structural integrity in embryonic stem cells probably implying recruitment of CBX5 to telomeres. Reports on the involvement in transcriptional regulation of telomeric repeat-containing RNA (TERRA) are conflicting; according is required for its transcriptional repression in embryonic stem cells. Acts as a negative regulator of chromatin incorporation of transcriptionally repressive histone MACROH2A1, particularily at telomeres. Participates in the allele-specific gene expression at the imprinted IGF2/H19 gene locus. On the maternal allele, required for the chromatin occupancy of SMC1 and CTCTF within the H19 imprinting control region (ICR) and involved in esatblishment of histone tails modifications in the ICR. Binds to zinc-finger coding genes with atypical chromatin signatures and regulates its H3K9me3 levels. Forms a complex with ZNF274, TRIM28 and SETDB1 to facilitate the deposition and maintenance of H3K9me3 at the 3' exons of zinc-finger genes. This Mus musculus (Mouse) protein is Transcriptional regulator ATRX (Atrx).